The primary structure comprises 519 residues: Dihydropyrimidinase (519 aa).

2 residues coordinate Zn(2+): His-67 and His-69. Ser-79 bears the Phosphoserine mark. Residue Lys-159 participates in Zn(2+) binding. Lys-159 is modified (N6-carboxylysine). Tyr-164 serves as a coordination point for substrate. 2 residues coordinate Zn(2+): His-192 and His-248. Lys-256 carries the N6-succinyllysine modification. Asp-326 provides a ligand contact to Zn(2+). Asn-347 contributes to the substrate binding site. A Phosphothreonine modification is found at Thr-510.

The protein belongs to the metallo-dependent hydrolases superfamily. Hydantoinase/dihydropyrimidinase family. As to quaternary structure, homotetramer. The cofactor is Zn(2+). Post-translationally, carboxylation allows a single lysine to coordinate two zinc ions.

It carries out the reaction 5,6-dihydrouracil + H2O = 3-(carbamoylamino)propanoate + H(+). Its function is as follows. Catalyzes the second step of the reductive pyrimidine degradation, the reversible hydrolytic ring opening of dihydropyrimidines. Can catalyze the ring opening of 5,6-dihydrouracil to N-carbamyl-alanine and of 5,6-dihydrothymine to N-carbamyl-amino isobutyrate. This Rattus norvegicus (Rat) protein is Dihydropyrimidinase (Dpys).